The following is a 538-amino-acid chain: Bifunctional purine biosynthesis protein PurH (538 aa).

Residues 8 to 158 (IPAPDKVQVK…KNHAYVTTLT (151 aa)) enclose the MGS-like domain.

This sequence belongs to the PurH family.

The enzyme catalyses (6R)-10-formyltetrahydrofolate + 5-amino-1-(5-phospho-beta-D-ribosyl)imidazole-4-carboxamide = 5-formamido-1-(5-phospho-D-ribosyl)imidazole-4-carboxamide + (6S)-5,6,7,8-tetrahydrofolate. It catalyses the reaction IMP + H2O = 5-formamido-1-(5-phospho-D-ribosyl)imidazole-4-carboxamide. The protein operates within purine metabolism; IMP biosynthesis via de novo pathway; 5-formamido-1-(5-phospho-D-ribosyl)imidazole-4-carboxamide from 5-amino-1-(5-phospho-D-ribosyl)imidazole-4-carboxamide (10-formyl THF route): step 1/1. Its pathway is purine metabolism; IMP biosynthesis via de novo pathway; IMP from 5-formamido-1-(5-phospho-D-ribosyl)imidazole-4-carboxamide: step 1/1. The polypeptide is Bifunctional purine biosynthesis protein PurH (Rhizobium rhizogenes (strain K84 / ATCC BAA-868) (Agrobacterium radiobacter)).